The sequence spans 190 residues: Elongation factor P 1 (190 aa).

This sequence belongs to the elongation factor P family.

The protein localises to the cytoplasm. It participates in protein biosynthesis; polypeptide chain elongation. Its function is as follows. Involved in peptide bond synthesis. Stimulates efficient translation and peptide-bond synthesis on native or reconstituted 70S ribosomes in vitro. Probably functions indirectly by altering the affinity of the ribosome for aminoacyl-tRNA, thus increasing their reactivity as acceptors for peptidyl transferase. The polypeptide is Elongation factor P 1 (efp1) (Lactobacillus johnsonii (strain CNCM I-12250 / La1 / NCC 533)).